The primary structure comprises 241 residues: ATP synthase subunit a (241 aa).

Transmembrane regions (helical) follow at residues 29–49 (NSSL…LFGI), 54–74 (VIPG…ISII), 86–106 (IPLI…GVLP), 114–134 (HVIV…IVGF), 153–173 (WLAP…PVSL), 177–197 (LAAN…FIVN), 200–220 (IFFT…EVFV), and 221–241 (AILQ…DAVK).

Belongs to the ATPase A chain family. In terms of assembly, F-type ATPases have 2 components, CF(1) - the catalytic core - and CF(0) - the membrane proton channel. CF(1) has five subunits: alpha(3), beta(3), gamma(1), delta(1), epsilon(1). CF(0) has three main subunits: a(1), b(2) and c(9-12). The alpha and beta chains form an alternating ring which encloses part of the gamma chain. CF(1) is attached to CF(0) by a central stalk formed by the gamma and epsilon chains, while a peripheral stalk is formed by the delta and b chains.

The protein resides in the cell inner membrane. Key component of the proton channel; it plays a direct role in the translocation of protons across the membrane. The chain is ATP synthase subunit a from Wolbachia sp. subsp. Drosophila simulans (strain wRi).